The sequence spans 418 residues: Nuclear hormone receptor 114 (418 aa).

A DNA-binding region (nuclear receptor) is located at residues 12–87 (DHVCLVCQDF…VGMDRNALQQ (76 aa)). 2 NR C4-type zinc fingers span residues 15–35 (CLVCQDFASGYHYGVPSCVGC) and 51–70 (CQFEGNCPVDKTIRCACRYC). Residues 89–130 (RDPIGYTKRTRRPKKELKTTSDCSSDEGASTPPSVSPLQLSP) are disordered. The region spanning 170–409 (PIRSLHEALC…AFARQLFFGD (240 aa)) is the NR LBD domain. An AF-2 region spans residues 398–409 (FSAFARQLFFGD).

Belongs to the nuclear hormone receptor family. As to expression, expressed in germ and intestinal cells and at low levels in the hypodermis.

The protein localises to the nucleus. Its function is as follows. Probable transcription factor which may have a role in detoxifying dietary metabolites arising from bacterial tryptophan metabolism. Required for fertility and involved in proper postembryonic germline development, especially germline stem cell (GSC) proliferation. Required for activation of the methionine/S-adenosylmethionine (Met/SAM) cycle in response to low levels of SAM. This is Nuclear hormone receptor 114 from Caenorhabditis elegans.